Reading from the N-terminus, the 398-residue chain is Lipase member N (398 aa).

The signal sequence occupies residues 1–18; sequence MMWLLLTTTCLICGTLNA. Residues 79-379 form the AB hydrolase-1 domain; the sequence is PVVYMQHALF…DWNHFDFVWG (301 aa). Serine 173 (nucleophile) is an active-site residue. Cysteine 247 and cysteine 256 are disulfide-bonded. Asparagine 272 is a glycosylation site (N-linked (GlcNAc...) asparagine). Active-site charge relay system residues include aspartate 344 and histidine 373.

It belongs to the AB hydrolase superfamily. Lipase family. Highly expressed in the epidermis in the granular keratinocytes. Also detected in other tissues, although at much lower levels, including lung and spleen.

It is found in the secreted. It carries out the reaction a sterol ester + H2O = a sterol + a fatty acid + H(+). The catalysed reaction is a triacylglycerol + H2O = a 1,2-diacylglycerol + a fatty acid + H(+). The enzyme catalyses a triacylglycerol + H2O = a diacylglycerol + a fatty acid + H(+). It catalyses the reaction a cholesterol ester + H2O = cholesterol + a fatty acid + H(+). Plays a highly specific role in the last step of keratinocyte differentiation. Contains two distinct domains: the alpha/beta hydrolase fold and the abhydrolase-associated lipase region, also features the consensus sequence of the active site of a genuine lipase. May have an essential function in lipid metabolism of the most differentiated epidermal layers. In Homo sapiens (Human), this protein is Lipase member N (LIPN).